Consider the following 317-residue polypeptide: Beta-ketoacyl-[acyl-carrier-protein] synthase III (317 aa).

Residues C112 and H244 contribute to the active site. The interval 245–249 is ACP-binding; it reads QANLR. Residue N274 is part of the active site.

It belongs to the thiolase-like superfamily. FabH family. As to quaternary structure, homodimer.

The protein resides in the cytoplasm. The catalysed reaction is malonyl-[ACP] + acetyl-CoA + H(+) = 3-oxobutanoyl-[ACP] + CO2 + CoA. It participates in lipid metabolism; fatty acid biosynthesis. In terms of biological role, catalyzes the condensation reaction of fatty acid synthesis by the addition to an acyl acceptor of two carbons from malonyl-ACP. Catalyzes the first condensation reaction which initiates fatty acid synthesis and may therefore play a role in governing the total rate of fatty acid production. Possesses both acetoacetyl-ACP synthase and acetyl transacylase activities. Its substrate specificity determines the biosynthesis of branched-chain and/or straight-chain of fatty acids. The chain is Beta-ketoacyl-[acyl-carrier-protein] synthase III from Shigella sonnei (strain Ss046).